The chain runs to 187 residues: Adenine phosphoribosyltransferase (187 aa).

133-137 (ATGGS) is an AMP binding site.

The protein belongs to the purine/pyrimidine phosphoribosyltransferase family. As to quaternary structure, homodimer. Mg(2+) is required as a cofactor.

The protein resides in the cytoplasm. Its subcellular location is the nucleus. It carries out the reaction AMP + diphosphate = 5-phospho-alpha-D-ribose 1-diphosphate + adenine. Its pathway is purine metabolism; AMP biosynthesis via salvage pathway; AMP from adenine: step 1/1. Functionally, catalyzes a salvage reaction resulting in the formation of AMP, that is energically less costly than de novo synthesis. The chain is Adenine phosphoribosyltransferase (APT1) from Kluyveromyces lactis (strain ATCC 8585 / CBS 2359 / DSM 70799 / NBRC 1267 / NRRL Y-1140 / WM37) (Yeast).